A 143-amino-acid polypeptide reads, in one-letter code: Ribosome-binding factor A (143 aa).

Residues 1 to 20 (MRFMGKNKFHTGPGPSQRQL) are disordered.

This sequence belongs to the RbfA family. Monomer. Binds 30S ribosomal subunits, but not 50S ribosomal subunits or 70S ribosomes.

The protein localises to the cytoplasm. Functionally, one of several proteins that assist in the late maturation steps of the functional core of the 30S ribosomal subunit. Associates with free 30S ribosomal subunits (but not with 30S subunits that are part of 70S ribosomes or polysomes). Required for efficient processing of 16S rRNA. May interact with the 5'-terminal helix region of 16S rRNA. The chain is Ribosome-binding factor A from Roseobacter denitrificans (strain ATCC 33942 / OCh 114) (Erythrobacter sp. (strain OCh 114)).